The primary structure comprises 372 residues: N-methyl-L-tryptophan oxidase (372 aa).

4-34 (DLIIIGSGSVGAAAGYYATRAGLNVLMTDAH) provides a ligand contact to FAD. S-8alpha-FAD cysteine is present on cysteine 308.

This sequence belongs to the MSOX/MTOX family. MTOX subfamily. As to quaternary structure, monomer. The cofactor is FAD.

The enzyme catalyses N(alpha)-methyl-L-tryptophan + O2 + H2O = L-tryptophan + formaldehyde + H2O2. Catalyzes the oxidative demethylation of N-methyl-L-tryptophan. The polypeptide is N-methyl-L-tryptophan oxidase (Escherichia coli (strain SMS-3-5 / SECEC)).